The sequence spans 327 residues: Petrobactin synthase (327 aa).

The catalysed reaction is N(8)-citryl-spermidine + 3,4-dihydroxybenzoyl-[aryl-carrier protein] = N(1)-(3,4-dihydroxybenzoyl)-N(8)-citryl-spermidine + holo-[aryl-carrier protein] + H(+). It carries out the reaction N(8),N'(8)-citryl-bis(spermidine) + 3,4-dihydroxybenzoyl-[aryl-carrier protein] = N(1)-(3,4-dihydroxybenzoyl)-N(8),N'(8)-citryl-bis(spermidine) + holo-[aryl-carrier protein] + H(+). It catalyses the reaction N(1)-(3,4-dihydroxybenzoyl)-N(8),N'(8)-citryl-bis(spermidine) + 3,4-dihydroxybenzoyl-[aryl-carrier protein] = petrobactin + holo-[aryl-carrier protein] + H(+). The protein operates within siderophore biosynthesis; petrobactin biosynthesis. Functionally, involved in the biosynthesis of petrobactin, a catecholate siderophore that functions in both iron acquisition and virulence. Transfers the activated 3,4-dihydroxybenzoate (3,4-DHBA) moiety from 3,4-DHBA-loaded AsbD to different receipient molecules, including N-citryl-spermidine, N8,N'8-citryl-bis(spermidine) and N1-(3,4-dihydroxybenzoyl)-N8,N'8-citryl-bis(spermidine). Also catalyzes the transfer of the activated 3,4-DHBA moiety from 3,4-DHBA-loaded AsbD to spermidine to generate DHB-spermidine (DHB-SP). This Bacillus anthracis protein is Petrobactin synthase.